The sequence spans 825 residues: NT-3 growth factor receptor (825 aa).

An N-terminal signal peptide occupies residues Met1–Ala31. 2 disulfide bridges follow: Cys32/Cys38 and Cys36/Cys45. The Extracellular portion of the chain corresponds to Cys32–Thr429. Asn68, Asn72, and Asn79 each carry an N-linked (GlcNAc...) asparagine glycan. 2 LRR repeats span residues Gly104–Lys125 and His128–Thr149. Residues Asn133 and Asn163 are each glycosylated (N-linked (GlcNAc...) asparagine). Residues Asn160–Leu209 form the LRRCT domain. 2 disulfide bridges follow: Cys164–Cys189 and Cys166–Cys207. N-linked (GlcNAc...) asparagine glycosylation is found at Asn203, Asn218, Asn232, Asn259, Asn267, Asn272, and Asn294. 2 Ig-like C2-type domains span residues Pro210–Thr300 and Ser309–Asn382. Cysteines 231 and 284 form a disulfide. Cys320 and Cys362 are oxidised to a cystine. Asn375 and Asn388 each carry an N-linked (GlcNAc...) asparagine glycan. Residues Phe430–Ile453 traverse the membrane as a helical segment. Over Asn454 to Gly825 the chain is Cytoplasmic. A Phosphoserine modification is found at Ser493. Tyr516 carries the post-translational modification Phosphotyrosine; by autocatalysis. The Protein kinase domain maps to Ile538–Gly825. ATP is bound by residues Leu544–Val552 and Lys572. Residue Asp679 is the Proton acceptor of the active site. 3 positions are modified to phosphotyrosine; by autocatalysis: Tyr705, Tyr709, and Tyr710.

It belongs to the protein kinase superfamily. Tyr protein kinase family. Insulin receptor subfamily. In terms of assembly, exists in a dynamic equilibrium between monomeric (low affinity) and dimeric (high affinity) structures. Binds SH2B2. Interacts with SQSTM1 and KIDINS220. Interacts with PTPRS. Interacts with MAPK8IP3/JIP3. Ligand-mediated auto-phosphorylation.

It localises to the membrane. The enzyme catalyses L-tyrosyl-[protein] + ATP = O-phospho-L-tyrosyl-[protein] + ADP + H(+). Functionally, receptor tyrosine kinase involved in nervous system and probably heart development. Upon binding of its ligand NTF3/neurotrophin-3, NTRK3 autophosphorylates and activates different signaling pathways, including the phosphatidylinositol 3-kinase/AKT and the MAPK pathways, that control cell survival and differentiation. This chain is NT-3 growth factor receptor (NTRK3), found in Macaca fascicularis (Crab-eating macaque).